Consider the following 714-residue polypeptide: Palmitoyltransferase ZDHHC5 (714 aa).

Over 1–13 (MPAESAKRFKPSK) the chain is Cytoplasmic. A helical transmembrane segment spans residues 14 to 34 (YVPVSAAAIFLVGATTLFFAF). Residues 35–52 (TCPGLSLSVSPAVPVYNA) lie on the Extracellular side of the membrane. A helical transmembrane segment spans residues 53 to 73 (VVFLFVLANFSMATFMDPGVF). Over 74–148 (PRAEEDEDKE…NCIGRRNYRY (75 aa)) the chain is Cytoplasmic. The residue at position 91 (Tyr-91) is a Phosphotyrosine. The DHHC domain maps to 104–154 (KWCATCRFYRPPRCSHCSVCDNCVEEFDHHCPWVNNCIGRRNYRYFFLFLL). Residue Cys-134 is the S-palmitoyl cysteine intermediate of the active site. The helical transmembrane segment at 149-169 (FFLFLLSLTAHITGVFGFGLL) threads the bilayer. Over 170-191 (YVLYHMEELSGVRTAVTMAVMC) the chain is Extracellular. Residues 192–212 (VAGLFFIPVAGLTGFHVVLVA) traverse the membrane as a helical segment. Residues 213–714 (RGRTTNEQVT…VGGTTYEISV (502 aa)) lie on the Cytoplasmic side of the membrane. Ser-247 carries the post-translational modification Phosphoserine. Positions 289–714 (GELRRTKSKG…VGGTTYEISV (426 aa)) are disordered. The residue at position 294 (Thr-294) is a Phosphothreonine. A phosphoserine mark is found at Ser-296 and Ser-299. Phosphothreonine is present on Thr-303. Phosphoserine is present on Ser-345. Phosphothreonine occurs at positions 348 and 350. The span at 359-373 (SSSSASAAMPHSSSA) shows a compositional bias: low complexity. Residues Ser-380, Ser-398, Ser-406, and Ser-409 each carry the phosphoserine modification. The span at 388–398 (AESSRQPSYRS) shows a compositional bias: polar residues. Phosphothreonine is present on Thr-411. The segment covering 422–432 (SSGSRSSSLKS) has biased composition (low complexity). Residues Ser-425, Ser-429, and Ser-432 each carry the phosphoserine modification. A Phosphothreonine modification is found at Thr-436. Residues 445–478 (SIRSEGTTSTSYKSLANQTRNGSLSYDSLLTPSD) are compositionally biased toward polar residues. 2 positions are modified to phosphoserine: Ser-529 and Ser-554. Position 616 is an omega-N-methylarginine (Arg-616). Ser-620 is subject to Phosphoserine. Residue Thr-658 is modified to Phosphothreonine. Residues 667–678 (TAYSKSNGQPKS) are compositionally biased toward polar residues. Over residues 683-692 (PPGPGQPPLS) the composition is skewed to pro residues. At Ser-693 the chain carries Phosphoserine. Omega-N-methylarginine is present on Arg-696.

The protein belongs to the DHHC palmitoyltransferase family. ERF2/ZDHHC9 subfamily. Post-translationally, phosphorylation regulates association with endocytic proteins and its subcellular localization. Phosphorylation by LYN during fatty acid uptake leads to inactivation of the activity. In terms of processing, autopalmitoylated. Palmitoylation of the C-terminal tail regulates stimulation-dependent plasma membrane motility.

The protein resides in the cell membrane. The enzyme catalyses L-cysteinyl-[protein] + hexadecanoyl-CoA = S-hexadecanoyl-L-cysteinyl-[protein] + CoA. Its function is as follows. Palmitoyltransferase that catalyzes the addition of palmitate onto various protein substrates such as CTNND2, CD36, GSDMD, NLRP3, NOD1, NOD2, STAT3 and S1PR1 thus plays a role in various biological processes including cell adhesion, inflammation, fatty acid uptake, bacterial sensing or cardiac functions. Plays an important role in the regulation of synapse efficacy by mediating palmitoylation of delta-catenin/CTNND2, thereby increasing synaptic delivery and surface stabilization of alpha-amino-3-hydroxy-5-methyl-4-isoxazole propionic acid receptors (AMPARs). Under basal conditions, remains at the synaptic membrane through FYN-mediated phosphorylation that prevents association with endocytic proteins. Neuronal activity enhances the internalization and trafficking of DHHC5 from spines to dendritic shafts where it palmitoylates delta-catenin/CTNND2. Regulates cell adhesion at the plasma membrane by palmitoylating GOLGA7B and DSG2. Plays a role in innate immune response by mediating the palmitoylation of NOD1 and NOD2 and their proper recruitment to the bacterial entry site and phagosomes. Also participates in fatty acid uptake by palmitoylating CD36 and thereby targeting it to the plasma membrane. Upon binding of fatty acids to CD36, gets phosphorylated by LYN leading to inactivation and subsequent CD36 caveolar endocytosis. Controls oligodendrocyte development by catalyzing STAT3 palmitoylation. Acts as a regulator of inflammatory response by mediating palmitoylation of NLRP3 and GSDMD. Palmitoylates NLRP3 to promote inflammasome assembly and activation. Activates pyroptosis by catalyzing palmitoylation of gasdermin-D (GSDMD), thereby promoting membrane translocation and pore formation of GSDMD. In Bos taurus (Bovine), this protein is Palmitoyltransferase ZDHHC5 (ZDHHC5).